Reading from the N-terminus, the 262-residue chain is Nurim (262 aa).

At 1-4 (MAPA) the chain is on the nuclear side. The chain crosses the membrane as a helical span at residues 5-28 (LLLVPAALASFILAFGTGVEFVRF). Over 29–58 (TSLRPLLGGIPESGGPDARHGWLAALQDRS) the chain is Perinuclear space. A helical membrane pass occupies residues 59 to 80 (ILASLAWDLCLLLLFVVQHSLM). The Nuclear portion of the chain corresponds to 81–97 (ATEAVKAWTSRYFGVLQ). The helical transmembrane segment at 98-114 (RSLYVACTALALQLVMR) threads the bilayer. At 115 to 133 (YWETTPRGPVLWEARAEPW) the chain is on the perinuclear space side. A helical membrane pass occupies residues 134-164 (ATWVPLLCFVLHVVSWLLIFSILLVFDYAEL). Over 165 to 191 (MGLKQVYYHVLGLGEPLSLKSPRALRL) the chain is Nuclear. Residues 192 to 210 (FSHLRHPVCVELLTVLWVV) traverse the membrane as a helical segment. Over 211–216 (PTLGTD) the chain is Perinuclear space. Residues 217 to 234 (RLLLALLFTLYLGLAHGL) traverse the membrane as a helical segment. Residues 235–262 (DQQDLRYLRSQLQRKLHLLSRPQDGEAE) are Nuclear-facing.

It belongs to the nurim family.

It localises to the nucleus inner membrane. The protein is Nurim (Nrm) of Mus musculus (Mouse).